Reading from the N-terminus, the 541-residue chain is Carotenoid 9,10(9',10')-cleavage dioxygenase 1 (541 aa).

Fe cation-binding residues include H222, H270, H336, and H526.

This sequence belongs to the carotenoid oxygenase family. Fe(2+) is required as a cofactor.

The enzyme catalyses all-trans-zeaxanthin + 2 O2 = 4,9-dimethyldodeca-2,4,6,8,10-pentaenedial + 2 (3R)-hydroxy-beta-ionone. In terms of biological role, cleaves a variety of carotenoids at the 9-10 and 9'-10' double bonds. Probably not involved in abscisic acid biosynthesis. In Pisum sativum (Garden pea), this protein is Carotenoid 9,10(9',10')-cleavage dioxygenase 1 (CCD1).